Reading from the N-terminus, the 707-residue chain is Alpha-hemolysin translocation ATP-binding protein HlyB (707 aa).

Residues 2 to 125 enclose the Peptidase C39 domain; the sequence is DFHHKNNYGL…DLYQGNIILI (124 aa). The active site involves His83. The region spanning 154–436 is the ABC transmembrane type-1 domain; that stretch reads FIETLIVSVF…LAQLWQDFQQ (283 aa). 5 helical membrane-spanning segments follow: residues 158–178, 191–211, 269–289, 295–315, and 387–407; these read LIVS…FQVV, LNII…LSGL, ALTS…MWYY, LVIL…SPIL, and AVMI…DLSI. In terms of domain architecture, ABC transporter spans 468-703; it reads ISFRNIRFRY…PESLYHYLHQ (236 aa). 502–509 is a binding site for ATP; sequence GRSGSGKS.

Belongs to the ABC transporter superfamily. Protein-1 exporter (TC 3.A.1.109) family.

The protein localises to the cell membrane. In terms of biological role, involved in the export of hemolysin A. The sequence is that of Alpha-hemolysin translocation ATP-binding protein HlyB (hlyB) from Proteus vulgaris.